We begin with the raw amino-acid sequence, 420 residues long: D-tagatose-1,6-bisphosphate aldolase subunit GatZ (420 aa).

Belongs to the GatZ/KbaZ family. GatZ subfamily. Forms a complex with GatY.

It functions in the pathway carbohydrate metabolism; D-tagatose 6-phosphate degradation; D-glyceraldehyde 3-phosphate and glycerone phosphate from D-tagatose 6-phosphate: step 2/2. In terms of biological role, component of the tagatose-1,6-bisphosphate aldolase GatYZ that is required for full activity and stability of the Y subunit. Could have a chaperone-like function for the proper and stable folding of GatY. When expressed alone, GatZ does not show any aldolase activity. Is involved in the catabolism of galactitol. This is D-tagatose-1,6-bisphosphate aldolase subunit GatZ from Escherichia coli O17:K52:H18 (strain UMN026 / ExPEC).